We begin with the raw amino-acid sequence, 178 residues long: MAETSTVARPYAKAAFEYARDHKALEAWSGQLASAKQVAADADFDAKVVSNPKLSHDQKTALLLEVCGELDESLCNFIRTVGSRGRLAALPAIAEQFEVLRAEEEKRVDVTIVSAFDLDAAQQDKLATALKKRLNREISITTRVDRALMGGVILRAGDTVIDGSVRGRLTRLRDALSA.

This sequence belongs to the ATPase delta chain family. As to quaternary structure, F-type ATPases have 2 components, F(1) - the catalytic core - and F(0) - the membrane proton channel. F(1) has five subunits: alpha(3), beta(3), gamma(1), delta(1), epsilon(1). F(0) has three main subunits: a(1), b(2) and c(10-14). The alpha and beta chains form an alternating ring which encloses part of the gamma chain. F(1) is attached to F(0) by a central stalk formed by the gamma and epsilon chains, while a peripheral stalk is formed by the delta and b chains.

The protein localises to the cell inner membrane. Its function is as follows. F(1)F(0) ATP synthase produces ATP from ADP in the presence of a proton or sodium gradient. F-type ATPases consist of two structural domains, F(1) containing the extramembraneous catalytic core and F(0) containing the membrane proton channel, linked together by a central stalk and a peripheral stalk. During catalysis, ATP synthesis in the catalytic domain of F(1) is coupled via a rotary mechanism of the central stalk subunits to proton translocation. In terms of biological role, this protein is part of the stalk that links CF(0) to CF(1). It either transmits conformational changes from CF(0) to CF(1) or is implicated in proton conduction. This Chromohalobacter salexigens (strain ATCC BAA-138 / DSM 3043 / CIP 106854 / NCIMB 13768 / 1H11) protein is ATP synthase subunit delta.